Consider the following 550-residue polypeptide: Kinase suppressor of Ras B (550 aa).

Low complexity-rich tracts occupy residues 21 to 56 and 63 to 75; these read SFSSWRRSSTSGSISQSSRTTSKTTTSSSVTSSNPI and ATSSSSVLPSTSS. The segment at 21–87 is disordered; sequence SFSSWRRSST…PPPASAPPRI (67 aa). The Phorbol-ester/DAG-type zinc finger occupies 90 to 145; sequence YHKMVPSKSKFRQCDVCEHIFIFDFVRKQHLDDVYACNVCGIRVHKGCLDRVKNDC. A disordered region spans residues 172–196; that stretch reads TTASISKSLTTSPTCSTSTTMSPAG. The span at 177–193 shows a compositional bias: low complexity; sequence SKSLTTSPTCSTSTTMS. The Protein kinase domain maps to 248 to 528; it reads VDVMTKIGDG…FQQIVKRITV (281 aa). The segment at 530-550 is disordered; that stretch reads MPRKESNKQKRRSTAHENPLF.

This sequence belongs to the protein kinase superfamily. TKL Ser/Thr protein kinase family. Interacts with ndk-1.

Its function is as follows. Probable inactive protein kinase which positively regulates Ras-mediated signaling probably acting at the level of let-60/ras or/and lin-45/raf. In the germline, regulates meiotic progression during oogenesis and mpk-1 (isoform b) phosphorylation. Plays a role in meiotic recombination events. Functions redundantly with ksr-1 in the Ras-mediated regulation of larval survival, the development of excretory canal, in determining vulval precursor cell fate during vulval induction and in mpk-1 phosphorylation in somatic cells. This Caenorhabditis elegans protein is Kinase suppressor of Ras B.